Here is a 273-residue protein sequence, read N- to C-terminus: Undecaprenyl-diphosphatase (273 aa).

A run of 7 helical transmembrane segments spans residues 6–26 (SLLIAAILGVVEGLTEFLPVS), 45–65 (AKTFEVVIQLGSILAVVVMFW), 90–110 (LTLIHILLGMIPAMVLGLVFH), 116–136 (LFNPINVMYALVVGGLLLIAA), 190–210 (YAASEFSFLLAVPMMMGATVL), 222–242 (ADIPMFAVGFVTAFVVALIAI), and 252–272 (ISFIPFAIYRFVVAAAVYVVF).

The protein belongs to the UppP family.

The protein localises to the cell inner membrane. It carries out the reaction di-trans,octa-cis-undecaprenyl diphosphate + H2O = di-trans,octa-cis-undecaprenyl phosphate + phosphate + H(+). Functionally, catalyzes the dephosphorylation of undecaprenyl diphosphate (UPP). Confers resistance to bacitracin. The sequence is that of Undecaprenyl-diphosphatase from Salmonella arizonae (strain ATCC BAA-731 / CDC346-86 / RSK2980).